Consider the following 299-residue polypeptide: Peroxisomal biogenesis factor 19 (299 aa).

The interval 1–61 (MAAAEEGCGV…KRAPGDTAKD (61 aa)) is disordered. At Ala2 the chain carries N-acetylalanine. The docking to the peroxisome membrane and binding to PEX3 stretch occupies residues 2 to 56 (AAAEEGCGVGVEDDRELEELLESALDDFDKAKPSPEHAPTISAPDASGPQKRAPG). A necessary for PEX19 function on peroxisome biogenesis region spans residues 2 to 91 (AAAEEGCGVG…QATAEFEKAM (90 aa)). Residues 12–27 (VEDDRELEELLESALD) show a composition bias toward acidic residues. Phosphoserine is present on residues Ser35 and Ser66. A Phosphothreonine modification is found at Thr236. A Cysteine methyl ester modification is found at Cys296. Residue Cys296 is the site of S-farnesyl cysteine attachment. Positions 297–299 (LIM) are cleaved as a propeptide — removed in mature form.

Belongs to the peroxin-19 family. Interacts with a broad range of peroxisomal membrane proteins, including PEX3, PEX10, PEX11A, PEX11B, PEX12, PEX13, PEX14 and PEX16, PXMP2/PMP22, PXMP4/PMP24, SLC25A17/PMP34, ABCD1/ALDP, ABCD2/ALDRP, and ABCD3/PMP70. Also interacts with the tumor suppressor CDKN2A/p19ARF.

Its subcellular location is the cytoplasm. It is found in the peroxisome membrane. Its function is as follows. Necessary for early peroxisomal biogenesis. Acts both as a cytosolic chaperone and as an import receptor for peroxisomal membrane proteins (PMPs). Binds and stabilizes newly synthesized PMPs in the cytoplasm by interacting with their hydrophobic membrane-spanning domains, and targets them to the peroxisome membrane by binding to the integral membrane protein PEX3. Excludes CDKN2A from the nucleus and prevents its interaction with MDM2, which results in active degradation of TP53. This chain is Peroxisomal biogenesis factor 19 (Pex19), found in Mus musculus (Mouse).